The sequence spans 411 residues: BRO1 domain-containing protein BROX (411 aa).

Residues 90–408 (FKWTDTLQGQ…DIKPQKDTGC (319 aa)) enclose the BRO1 domain. Lys-283 is subject to N6-acetyllysine. The disordered stretch occupies residues 374–411 (DLTKRPKDDSTKPKPEEEVKPVKEPDIKPQKDTGCYIS). A compositionally biased stretch (basic and acidic residues) spans 375–404 (LTKRPKDDSTKPKPEEEVKPVKEPDIKPQK). Cys-408 bears the Cysteine methyl ester mark. Cys-408 is lipidated: S-farnesyl cysteine. The propeptide at 409 to 411 (YIS) is removed in mature form.

The protein belongs to the BROX family. As to quaternary structure, monomer. Interacts with CHMP4B. Interacts with CHMP5: this interaction allows the recruitment of BROX to cellular membranes. Interacts with SYN2; this interaction promotes SYN2 ubiquitination and facilitates the relaxation of mechanical stress imposed by compressive actin fibers at the rupture site. In terms of processing, farnesylation is required for nuclear envelope localization.

It localises to the nucleus membrane. Its function is as follows. Nuclear envelope-associated factor that is involved in the nuclear envelope ruptures during interphase (NERDI) repair, where it is locally recruited by CHMP5 and reduces cytoskeletal stress through its action on SYN2 to help reseal the ruptured membrane. The protein is BRO1 domain-containing protein BROX of Pongo abelii (Sumatran orangutan).